Consider the following 118-residue polypeptide: Large ribosomal subunit protein bL20 (118 aa).

The protein belongs to the bacterial ribosomal protein bL20 family.

In terms of biological role, binds directly to 23S ribosomal RNA and is necessary for the in vitro assembly process of the 50S ribosomal subunit. It is not involved in the protein synthesizing functions of that subunit. The protein is Large ribosomal subunit protein bL20 of Staphylococcus epidermidis (strain ATCC 35984 / DSM 28319 / BCRC 17069 / CCUG 31568 / BM 3577 / RP62A).